Reading from the N-terminus, the 417-residue chain is MAPLFLPLLIALALAPGPTASADVLEGDSSEDRAFRVRISGNAPLQGVLGGALTISCHVHYLRPPPGRRAVLGSPRVKWTFLSGGREAEVLVARGLRVKVSEAYRFRVALPAYPASLTDVSLALSELRPNDSGIYRCEVQHGIDDSSDAVEVKVKGVVFLYREGSARYAFSFARAQEACARIGARIATPEQLYAAYLGGYEQCDAGWLSDQTVRYPIQTPREACYGDMDGFPGVRNYGLVDPDDLYDIYCYAEDLNGELFLGAPPDNVTLEEATAYCRERGAEIATTGQLYAAWDGGLDRCSPGWLADGSVRYPIVTPSQRCGGGLPGVKTLFLFPNQTGFPNKYSRFNVYCFRDSGQPSTTPEASXPASDGLEAIVTVTETLEELHVPREAVESESRGAIYSVPIVEDGGGARSPP.

An N-terminal signal peptide occupies residues 1-22; it reads MAPLFLPLLIALALAPGPTASA. The 133-residue stretch at 23–155 folds into the Ig-like V-type domain; that stretch reads DVLEGDSSED…SSDAVEVKVK (133 aa). Intrachain disulfides connect Cys57–Cys137, Cys179–Cys250, and Cys203–Cys224. N-linked (GlcNAc...) asparagine glycosylation occurs at Asn130. 2 consecutive Link domains span residues 157–252 and 257–354; these read VVFL…YCYA and GELF…YCFR. N-linked (GlcNAc...) asparagine glycosylation occurs at Asn267. 2 disulfide bridges follow: Cys277–Cys352 and Cys301–Cys322. Residue Asn337 is glycosylated (N-linked (GlcNAc...) asparagine).

It belongs to the aggrecan/versican proteoglycan family. Central nervous system.

It is found in the secreted. Its subcellular location is the extracellular space. The protein resides in the extracellular matrix. Its function is as follows. May play a role in the terminally differentiating and the adult nervous system during postnatal development. Could stabilize interactions between hyaluronan (HA) and brain proteoglycans. The chain is Brevican core protein (BCAN) from Felis catus (Cat).